We begin with the raw amino-acid sequence, 577 residues long: Sulfite reductase [NADPH] hemoprotein beta-component (577 aa).

[4Fe-4S] cluster-binding residues include Cys-436, Cys-442, Cys-481, and Cys-485. Siroheme is bound at residue Cys-485.

This sequence belongs to the nitrite and sulfite reductase 4Fe-4S domain family. As to quaternary structure, alpha(8)-beta(8). The alpha component is a flavoprotein, the beta component is a hemoprotein. Requires siroheme as cofactor. [4Fe-4S] cluster serves as cofactor.

The catalysed reaction is hydrogen sulfide + 3 NADP(+) + 3 H2O = sulfite + 3 NADPH + 4 H(+). It functions in the pathway sulfur metabolism; hydrogen sulfide biosynthesis; hydrogen sulfide from sulfite (NADPH route): step 1/1. Functionally, component of the sulfite reductase complex that catalyzes the 6-electron reduction of sulfite to sulfide. This is one of several activities required for the biosynthesis of L-cysteine from sulfate. This is Sulfite reductase [NADPH] hemoprotein beta-component from Shewanella woodyi (strain ATCC 51908 / MS32).